The primary structure comprises 851 residues: MAGASSYFSLRRLLLLLLPLVPLLGATTAAAAGANSSVTYDHRSLIISGRRRLLISTSIHYPRSVPEMWPKLVAEAKDGGADCVETYVFWNGHEPAQGQYYFEERFDLVRFAKIVKDAGLYMILRIGPFVAAEWTFGGVPVWLHYAPGTVFRTNNEPFKSHMKRFTTYIVDMMKKEQFFASQGGHIILAQVENEYGDMEQAYGAGAKPYAMWAASMALAQNTGVPWIMCQQYDAPDPVINTCNSFYCDQFKPNSPTKPKFWTENWPGWFQTFGESNPHRPPEDVAFSVARFFGKGGSLQNYYVYHGGTNFGRTTGGPFITTSYDYDAPIDEYGLRRLPKWAHLRDLHKSIKLGEHTLLYGNSSFVSLGPQQEADVYTDQSGGCVAFLSNVDSEKDKVVTFQSRSYDLPAWSVSILPDCKNVAFNTAKVRSQTLMMDMVPANLESSKVDGWSIFREKYGIWGNIDLVRNGFVDHINTTKDSTDYLWYTTSFDVDGSHLAGGNHVLHIESKGHAVQAFLNNELIGSAYGNGSKSNFSVEMPVNLRAGKNKLSLLSMTVGLQNGGPMYEWAGAGITSVKISGMENRIIDLSSNKWEYKIGLEGEYYSLFKADKGKDIRWMPQSEPPKNQPMTWYKVNVDVPQGDDPVGLDMQSMGKGLAWLNGNAIGRYWPRISPVSDRCTSSCDYRGTFSPNKCRRGCGQPTQRWYHVPRSWFHPSGNTLVIFEEKGGDPTKITFSRRTVASVCSFVSEHYPSIDLESWDRNTQNDGRDAAKVQLSCPKGKSISSVKFVSFGNPSGTCRSYQQGSCHHPNSISVVEKACLNMNGCTVSLSDEGFGEDLCPGVTKTLAIEADCS.

The first 29 residues, Met-1 to Ala-29, serve as a signal peptide directing secretion. Asn-35 is a glycosylation site (N-linked (GlcNAc...) asparagine). Glu-194 serves as the catalytic Proton donor. Residue Glu-263 is the Nucleophile of the active site. N-linked (GlcNAc...) asparagine glycans are attached at residues Asn-361, Asn-475, Asn-528, and Asn-533. The SUEL-type lectin domain maps to Gly-765–Ser-851.

Belongs to the glycosyl hydrolase 35 family.

It localises to the secreted. The protein resides in the extracellular space. Its subcellular location is the apoplast. It catalyses the reaction Hydrolysis of terminal non-reducing beta-D-galactose residues in beta-D-galactosides.. This chain is Beta-galactosidase 3, found in Oryza sativa subsp. japonica (Rice).